Reading from the N-terminus, the 633-residue chain is Chaperone protein HtpG (633 aa).

Residues 1–341 (MTAPHETMSF…SADLPLNVSR (341 aa)) form an a; substrate-binding region. The tract at residues 342 to 562 (ELLQESRDVK…DGDMSGYLQR (221 aa)) is b. A c region spans residues 563 to 633 (LLKQAGQKAP…YVQRVNRLLA (71 aa)).

Belongs to the heat shock protein 90 family. In terms of assembly, homodimer.

The protein resides in the cytoplasm. Its function is as follows. Molecular chaperone. Has ATPase activity. The chain is Chaperone protein HtpG from Cupriavidus metallidurans (strain ATCC 43123 / DSM 2839 / NBRC 102507 / CH34) (Ralstonia metallidurans).